We begin with the raw amino-acid sequence, 452 residues long: MATTASSAANSASRFSIDSSISRSRHGDSSPWLLPSDSHDHPTLSLSQDDPFSAPSVSPPTGNNSSDYDNADKKPPPVWNMPSSNSSSDVGPVMGAAESWPALSLSARSSSIKSPSLDASKPFPDGSSSSIPPPQATSNTSTNANAGSSVSATSSENSAVNNSQRKPFRRNNNTSSSSTSSNVSNAAPLNTRDQNHSQRGGGSFGSGNFRNSQRNRNSSSYPRGEGLHHGNRRNYEHGNQSGFSHRNYSGRDMHLQPQRGVGMIRPQMLMGPPSFPASSAQYMAAPQLGSYGGPIIYPDYAQHVFMPHPSPDPMGLVGPFPLQPMYFRNFDAILYNKILTQVEYYFSADNLSRDEHLRDQMNDEGWVPVRVIAAFRRLAELTNNIQTILEALRSSEVVEIQGETLRRRGDWDKYLLPREPSRSGPAAGASNNASLVSQIESMTLSERSREGV.

Over residues 1-22 (MATTASSAANSASRFSIDSSIS) the composition is skewed to low complexity. Residues 1–251 (MATTASSAAN…GFSHRNYSGR (251 aa)) are disordered. Alanine 2 bears the N-acetylalanine mark. Polar residues predominate over residues 44 to 68 (LSLSQDDPFSAPSVSPPTGNNSSDY). Low complexity-rich tracts occupy residues 99-117 (SWPA…SPSL), 136-163 (ATSN…VNNS), 171-185 (NNNT…NVSN), and 206-223 (SGNF…SYPR). A compositionally biased stretch (basic and acidic residues) spans 225 to 236 (EGLHHGNRRNYE). A compositionally biased stretch (polar residues) spans 237–247 (HGNQSGFSHRN). An HTH La-type RNA-binding domain is found at 328 to 417 (RNFDAILYNK…RGDWDKYLLP (90 aa)). Positions 419-452 (EPSRSGPAAGASNNASLVSQIESMTLSERSREGV) are disordered. Residues 422–434 (RSGPAAGASNNAS) are compositionally biased toward low complexity. Polar residues predominate over residues 435–445 (LVSQIESMTLS).

It belongs to the LARP family.

It localises to the cytoplasm. Promotes leaf senescence. This chain is La-related protein 1B (LARP1B), found in Arabidopsis thaliana (Mouse-ear cress).